The sequence spans 650 residues: Pentatricopeptide repeat-containing protein At1g51965, mitochondrial (650 aa).

Residues 1–23 constitute a mitochondrion transit peptide; the sequence is MKLLRRRFFNSVNTITRPNRRHY. 14 PPR repeats span residues 132–169, 170–200, 202–236, 237–267, 269–303, 304–338, 339–369, 371–405, 406–440, 441–475, 476–510, 511–545, 546–580, and 581–615; these read DPFL…NVHG, NIST…WDLK, NSFT…GHKL, DIFA…RHCR, DEYT…GLTL, NVVG…GCRP, NEYT…SKRY, TQGI…PVKG, ERDS…GVVT, DTMM…GPSP, DIFT…DCKP, DIIS…GLNP, DVVT…GCQP, and NIVT…GLTP.

It belongs to the PPR family. P subfamily.

Its subcellular location is the mitochondrion. This is Pentatricopeptide repeat-containing protein At1g51965, mitochondrial from Arabidopsis thaliana (Mouse-ear cress).